Consider the following 803-residue polypeptide: Phenylalanine--tRNA ligase beta subunit (803 aa).

A tRNA-binding domain is found at 39-151 (SMKFSGIKIG…KNAIIGEDIK (113 aa)). The region spanning 406–482 (PKKILIKLYK…RFYGFEKIPI (77 aa)) is the B5 domain. Mg(2+) contacts are provided by Asp466 and Asp470. One can recognise an FDX-ACB domain in the interval 707–800 (SDIPFNYRDI…LKKNFLIEIR (94 aa)).

Belongs to the phenylalanyl-tRNA synthetase beta subunit family. Type 1 subfamily. In terms of assembly, tetramer of two alpha and two beta subunits. The cofactor is Mg(2+).

The protein resides in the cytoplasm. It carries out the reaction tRNA(Phe) + L-phenylalanine + ATP = L-phenylalanyl-tRNA(Phe) + AMP + diphosphate + H(+). The sequence is that of Phenylalanine--tRNA ligase beta subunit from Wigglesworthia glossinidia brevipalpis.